The following is a 285-amino-acid chain: Eukaryotic translation initiation factor 3 subunit F-2 (285 aa).

In terms of domain architecture, MPN spans 11-145 (VLIKPLVLFQ…TRLYCAVEIG (135 aa)).

This sequence belongs to the eIF-3 subunit F family. As to quaternary structure, component of the eukaryotic translation initiation factor 3 (eIF-3) complex. The eIF-3 complex interacts with pix.

The protein resides in the cytoplasm. Functionally, component of the eukaryotic translation initiation factor 3 (eIF-3) complex, which is involved in protein synthesis of a specialized repertoire of mRNAs and, together with other initiation factors, stimulates binding of mRNA and methionyl-tRNAi to the 40S ribosome. The eIF-3 complex specifically targets and initiates translation of a subset of mRNAs involved in cell proliferation. This Drosophila erecta (Fruit fly) protein is Eukaryotic translation initiation factor 3 subunit F-2.